Consider the following 128-residue polypeptide: Ribonuclease P protein component (128 aa).

Belongs to the RnpA family. In terms of assembly, consists of a catalytic RNA component (M1 or rnpB) and a protein subunit.

It carries out the reaction Endonucleolytic cleavage of RNA, removing 5'-extranucleotides from tRNA precursor.. Its function is as follows. RNaseP catalyzes the removal of the 5'-leader sequence from pre-tRNA to produce the mature 5'-terminus. It can also cleave other RNA substrates such as 4.5S RNA. The protein component plays an auxiliary but essential role in vivo by binding to the 5'-leader sequence and broadening the substrate specificity of the ribozyme. This Chromohalobacter salexigens (strain ATCC BAA-138 / DSM 3043 / CIP 106854 / NCIMB 13768 / 1H11) protein is Ribonuclease P protein component.